Reading from the N-terminus, the 434-residue chain is Alpha-enolase (434 aa).

Position 2 is an N-acetylserine (serine 2). An N6-acetyllysine modification is found at lysine 5. Serine 40 is a binding site for Mg(2+). Tyrosine 44 carries the post-translational modification Phosphotyrosine. An N6-acetyllysine; alternate modification is found at lysine 60. Lysine 60 is modified (N6-succinyllysine; alternate). An N6-acetyllysine mark is found at lysine 64 and lysine 71. An N6-acetyllysine; alternate modification is found at lysine 89. The residue at position 89 (lysine 89) is an N6-succinyllysine; alternate. Lysine 92 and lysine 126 each carry N6-acetyllysine. Residues histidine 158 and glutamate 167 each contribute to the substrate site. N6-acetyllysine occurs at positions 193 and 199. Residue lysine 202 is modified to N6-acetyllysine; alternate. Residue lysine 202 forms a Glycyl lysine isopeptide (Lys-Gly) (interchain with G-Cter in SUMO2); alternate linkage. The Proton donor role is filled by glutamate 210. 2 positions are modified to N6-acetyllysine; alternate: lysine 228 and lysine 233. At lysine 228 the chain carries N6-succinyllysine; alternate. Lysine 228 carries the N6-(2-hydroxyisobutyryl)lysine; alternate modification. Lysine 233 bears the N6-malonyllysine; alternate mark. Aspartate 245 contributes to the Mg(2+) binding site. Serine 254 bears the Phosphoserine mark. At lysine 256 the chain carries N6-acetyllysine. A Phosphoserine modification is found at serine 263. N6-acetyllysine; alternate is present on lysine 281. Lysine 281 bears the N6-(2-hydroxyisobutyryl)lysine; alternate mark. Tyrosine 287 carries the phosphotyrosine modification. Position 291 is a phosphoserine (serine 291). Positions 293 and 318 each coordinate Mg(2+). Substrate contacts are provided by glutamate 293 and aspartate 318. Residues lysine 335 and lysine 343 each carry the N6-acetyllysine modification. The active-site Proton acceptor is the lysine 343. Substrate-binding positions include 370 to 373 (SHRS) and lysine 394. The interval 405 to 434 (AKYNQILRIEEELGSKAKFAGRSFRNPLAK) is required for interaction with PLG. Lysine 406 is modified (N6-acetyllysine). Lysine 420 carries the N6-acetyllysine; alternate modification. An N6-succinyllysine; alternate modification is found at lysine 420. At lysine 420 the chain carries N6-malonyllysine; alternate.

The protein belongs to the enolase family. In terms of assembly, mammalian enolase is composed of 3 isozyme subunits, alpha, beta and gamma, which can form homodimers or heterodimers which are cell-type and development-specific. ENO1 interacts with PLG in the neuronal plasma membrane and promotes its activation. The C-terminal lysine is required for this binding. Interacts with ENO4 and PGAM2. Interacts with CMTM6. Mg(2+) serves as cofactor. ISGylated. In terms of processing, lysine 2-hydroxyisobutyrylation (Khib) by p300/EP300 activates the phosphopyruvate hydratase activity. As to expression, the alpha/alpha homodimer is expressed in embryo and in most adult tissues. The alpha/beta heterodimer and the beta/beta homodimer are found in striated muscle, and the alpha/gamma heterodimer and the gamma/gamma homodimer in neurons.

Its subcellular location is the cytoplasm. It localises to the cell membrane. It catalyses the reaction (2R)-2-phosphoglycerate = phosphoenolpyruvate + H2O. Its pathway is carbohydrate degradation; glycolysis; pyruvate from D-glyceraldehyde 3-phosphate: step 4/5. In terms of biological role, glycolytic enzyme the catalyzes the conversion of 2-phosphoglycerate to phosphoenolpyruvate. In addition to glycolysis, involved in various processes such as growth control, hypoxia tolerance and allergic responses. May also function in the intravascular and pericellular fibrinolytic system due to its ability to serve as a receptor and activator of plasminogen on the cell surface of several cell-types such as leukocytes and neurons. Stimulates immunoglobulin production. The polypeptide is Alpha-enolase (ENO1) (Bos taurus (Bovine)).